Here is a 106-residue protein sequence, read N- to C-terminus: UPF0145 protein PSEEN3024 (106 aa).

This sequence belongs to the UPF0145 family.

In Pseudomonas entomophila (strain L48), this protein is UPF0145 protein PSEEN3024.